The chain runs to 530 residues: Trigger factor (530 aa).

The PPIase FKBP-type domain occupies Asp-162–Pro-243. Residues Asn-432–Lys-530 are disordered. 2 stretches are compositionally biased toward basic and acidic residues: residues Ser-459–Pro-478 and Lys-501–Ala-512.

This sequence belongs to the FKBP-type PPIase family. Tig subfamily.

The protein localises to the cytoplasm. It catalyses the reaction [protein]-peptidylproline (omega=180) = [protein]-peptidylproline (omega=0). In terms of biological role, involved in protein export. Acts as a chaperone by maintaining the newly synthesized protein in an open conformation. Functions as a peptidyl-prolyl cis-trans isomerase. The chain is Trigger factor from Cutibacterium acnes (strain DSM 16379 / KPA171202) (Propionibacterium acnes).